The chain runs to 324 residues: Glutaminase 2 (324 aa).

Residues serine 75, asparagine 127, glutamate 171, asparagine 178, tyrosine 202, tyrosine 254, and valine 272 each coordinate substrate.

It belongs to the glutaminase family. As to quaternary structure, homotetramer.

It catalyses the reaction L-glutamine + H2O = L-glutamate + NH4(+). The polypeptide is Glutaminase 2 (Halalkalibacterium halodurans (strain ATCC BAA-125 / DSM 18197 / FERM 7344 / JCM 9153 / C-125) (Bacillus halodurans)).